We begin with the raw amino-acid sequence, 573 residues long: Acyl-coenzyme A synthetase ACSM1, mitochondrial (573 aa).

The N-terminal 35 residues, 1 to 35 (MQWLKSFQICKVLQGFSLSPTQLHRRLFSRVGAPR), are a transit peptide targeting the mitochondrion. Lys-81 is modified (N6-succinyllysine). Position 142 is an N6-acetyllysine; alternate (Lys-142). Lys-142 carries the N6-succinyllysine; alternate modification. Lys-179 carries the post-translational modification N6-succinyllysine. The residue at position 200 (Lys-200) is an N6-acetyllysine; alternate. At Lys-200 the chain carries N6-succinyllysine; alternate. Lys-210 carries the N6-acetyllysine modification. Residue 222–230 (TSGTTGYPK) participates in ATP binding. N6-succinyllysine occurs at positions 233 and 324. 2 positions are modified to N6-acetyllysine; alternate: Lys-352 and Lys-387. Lys-352 and Lys-387 each carry N6-succinyllysine; alternate. ATP-binding residues include Asp-448 and Arg-463. N6-succinyllysine is present on Lys-501. Lys-527 bears the N6-acetyllysine mark. N6-acetyllysine; alternate is present on Lys-534. Lys-534 is subject to N6-succinyllysine; alternate. Lys-545 is subject to N6-acetyllysine. ATP is bound at residue Lys-559.

This sequence belongs to the ATP-dependent AMP-binding enzyme family. Monomer. The cofactor is Mg(2+). Mn(2+) is required as a cofactor. Highly expressed in liver and kidney.

The protein resides in the mitochondrion matrix. The protein localises to the mitochondrion. The enzyme catalyses a medium-chain fatty acid + ATP + CoA = a medium-chain fatty acyl-CoA + AMP + diphosphate. The catalysed reaction is benzoate + ATP + CoA = benzoyl-CoA + AMP + diphosphate. It catalyses the reaction (R)-lipoate + GTP + H(+) = (R)-lipoyl-GMP + diphosphate. It carries out the reaction octanoate + ATP + CoA = octanoyl-CoA + AMP + diphosphate. The enzyme catalyses decanoate + ATP + CoA = decanoyl-CoA + AMP + diphosphate. The catalysed reaction is dodecanoate + ATP + CoA = dodecanoyl-CoA + AMP + diphosphate. It catalyses the reaction tetradecanoate + ATP + CoA = tetradecanoyl-CoA + AMP + diphosphate. It carries out the reaction hexanoate + ATP + CoA = hexanoyl-CoA + AMP + diphosphate. The enzyme catalyses butanoate + ATP + CoA = butanoyl-CoA + AMP + diphosphate. The catalysed reaction is hexadecanoate + ATP + CoA = hexadecanoyl-CoA + AMP + diphosphate. Its function is as follows. Catalyzes the activation of fatty acids by CoA to produce an acyl-CoA, the first step in fatty acid metabolism. Capable of activating medium-chain fatty acids (e.g. butyric (C4) to decanoic (C10) acids), and certain carboxylate-containing xenobiotics, e.g. benzoate. Also catalyzes the activation of lipoate to lipoyl-nucleoside monophosphate. Activates lipoate with GTP at a 1000-fold higher rate than with ATP and activates both (R)- and (S)-lipoate to the respective lipoyl-GMP, with a preference for (R)-lipoate. The polypeptide is Acyl-coenzyme A synthetase ACSM1, mitochondrial (Acsm1) (Mus musculus (Mouse)).